A 260-amino-acid polypeptide reads, in one-letter code: ProSAAS (260 aa).

The N-terminal stretch at 1 to 33 (MAGSPLLWGPRAGGVGLLVLLLLGLFRPPPALC) is a signal peptide. The segment at 34 to 215 (ARPVKEPRGL…SADSEGVAAP (182 aa)) is proSAAS(1-180). Thr-53 carries O-linked (GalNAc...) threonine glycosylation. The segment at 165-188 (RPRPPVYDDGPAGPDAEEAGDETP) is disordered. Residues 179-188 (DAEEAGDETP) are compositionally biased toward acidic residues. The segment at 221–260 (AADHDVGSELPPEGVLGALLRVKRLETPAPQVPARRLLPP) is C-terminal inhibitory domain; interacts with PCSK1. Ser-228 carries O-linked (GalNAc...) serine glycosylation. The Sufficient for inhibition of PCSK1 signature appears at 239–244 (LLRVKR). O-linked (GalNAc...) threonine glycosylation occurs at Thr-247.

In terms of assembly, interacts via the C-terminal inhibitory domain with PCSK1 66 kDa form. Post-translationally, proteolytically cleaved in the Golgi. In terms of processing, O-glycosylated with a core 1 or possibly core 8 glycan. In terms of tissue distribution, expressed in brain and pancreas.

The protein resides in the secreted. The protein localises to the golgi apparatus. It is found in the trans-Golgi network. Functionally, may function in the control of the neuroendocrine secretory pathway. Proposed be a specific endogenous inhibitor of PCSK1. ProSAAS and Big PEN-LEN, both containing the C-terminal inhibitory domain, but not the further processed peptides reduce PCSK1 activity in the endoplasmic reticulum and Golgi. It reduces the activity of the 84 kDa form but not the autocatalytically derived 66 kDa form of PCSK1. Subsequent processing of proSAAS may eliminate the inhibition. Slows down convertase-mediated processing of proopiomelanocortin and proenkephalin. May control the intracellular timing of PCSK1 rather than its total level of activity. Endogenous ligand for GPR171. Neuropeptide involved in the regulation of feeding. The chain is ProSAAS (PCSK1N) from Homo sapiens (Human).